Consider the following 381-residue polypeptide: MADDKKTNDYTVEMDKLDQGSKNFEAPLPPVQPRSAPNAQLANNPILPVLAYCGSSIMMTVMNKYVLSGTDFNLNFLLLCVQSIVCIVAIQTCKASKLITYRDFNADEAKKWFPITLLLIGMIYTGSKALQFLSIPVYTIFKNLTIILIAYGEVLWFGGSVTGLTLFSFGLMVLSSIIAAWADIKHAVESSGDATAKVSTLNAGYIWMLINCLCTSSYVLGMRKRIKLTNFKDFDTMFYNNLLSIPVLLVLTFLMEDWSSANITRNFPPADRNGIMFAMILSGLSSVFISYTSAWCVRVTSSTTYSMVGALNKLPIAVSGLIFFDAPVTFPSVSAIVVGFVSGIVYAVAKIKQNAKPKTGVLPTSNPVSASSQSMRDSLRS.

Over 1 to 40 (MADDKKTNDYTVEMDKLDQGSKNFEAPLPPVQPRSAPNAQ) the chain is Cytoplasmic. A helical membrane pass occupies residues 41–61 (LANNPILPVLAYCGSSIMMTV). The Lumenal portion of the chain corresponds to 62-71 (MNKYVLSGTD). A helical membrane pass occupies residues 72 to 92 (FNLNFLLLCVQSIVCIVAIQT). Residues 93-110 (CKASKLITYRDFNADEAK) lie on the Cytoplasmic side of the membrane. Residues 111–127 (KWFPITLLLIGMIYTGS) form a helical membrane-spanning segment. Over 128 to 134 (KALQFLS) the chain is Lumenal. Residues 135-151 (IPVYTIFKNLTIILIAY) traverse the membrane as a helical segment. The Cytoplasmic segment spans residues 152–160 (GEVLWFGGS). The helical transmembrane segment at 161 to 182 (VTGLTLFSFGLMVLSSIIAAWA) threads the bilayer. Topologically, residues 183–200 (DIKHAVESSGDATAKVST) are lumenal. The chain crosses the membrane as a helical span at residues 201 to 221 (LNAGYIWMLINCLCTSSYVLG). Over 222–233 (MRKRIKLTNFKD) the chain is Cytoplasmic. A helical transmembrane segment spans residues 234-254 (FDTMFYNNLLSIPVLLVLTFL). Residues 255 to 274 (MEDWSSANITRNFPPADRNG) lie on the Lumenal side of the membrane. N-linked (GlcNAc...) asparagine glycosylation is present at Asn-262. Residues 275-295 (IMFAMILSGLSSVFISYTSAW) form a helical membrane-spanning segment. Residues 296-303 (CVRVTSST) are Cytoplasmic-facing. Residues 304 to 324 (TYSMVGALNKLPIAVSGLIFF) traverse the membrane as a helical segment. Residues 325-327 (DAP) lie on the Lumenal side of the membrane. Residues 328–348 (VTFPSVSAIVVGFVSGIVYAV) form a helical membrane-spanning segment. Residues 349-381 (AKIKQNAKPKTGVLPTSNPVSASSQSMRDSLRS) are Cytoplasmic-facing. The segment at 362-381 (LPTSNPVSASSQSMRDSLRS) is disordered.

Belongs to the TPT transporter family. SLC35D subfamily. As to quaternary structure, homooligomer.

It is found in the golgi apparatus membrane. It localises to the cytoplasmic vesicle membrane. The protein resides in the endoplasmic reticulum membrane. In terms of biological role, involved in the import of GDP-mannose from the cytoplasm into the Golgi lumen. The protein is GDP-mannose transporter (gmt1) of Aspergillus clavatus (strain ATCC 1007 / CBS 513.65 / DSM 816 / NCTC 3887 / NRRL 1 / QM 1276 / 107).